Here is a 153-residue protein sequence, read N- to C-terminus: Natriuretic peptides A (153 aa).

Positions 1–25 (MGSFSTIMASFLLFLAFQLQGQTRA) are cleaved as a signal peptide. 2 propeptides span residues 26–123 (NPVY…AAPR) and 93–103 (DGGALGRGSWD). The tract at residues 54 to 105 (EDEVMPPQVLSDQSEEERAALSPLPEVPPWTGEVNPAQRDGGALGRGSWDSS) is disordered. Residue S129 is modified to Phosphoserine. C130 and C146 are joined by a disulfide. Residues 147-151 (NSFRY) are important for degradation of atrial natriuretic peptide by IDE.

Belongs to the natriuretic peptide family. In terms of assembly, homodimer; disulfide-linked antiparallel dimer. The precursor molecule is proteolytically cleaved by CORIN at Arg-123 to produce the atrial natriuretic peptide. Undergoes further proteolytic cleavage by unknown proteases to give rise to long-acting natriuretic peptide, vessel dilator and kaliuretic peptide. Additional processing gives rise to the auriculin and atriopeptin peptides. In the kidneys, alternative processing by an unknown protease results in the peptide urodilatin. In terms of processing, cleavage by MME initiates degradation of the factor and thereby regulates its activity. Degradation by IDE results in reduced activation of NPR1 (in vitro). During IDE degradation, the resulting products can temporarily stimulate NPR2 to produce cGMP, before the fragments are completely degraded and inactivated by IDE (in vitro). Post-translationally, degraded by IDE. Phosphorylation on Ser-129 decreases vasorelaxant activity.

It localises to the secreted. The protein resides in the perikaryon. Its subcellular location is the cell projection. In terms of biological role, hormone that plays a key role in mediating cardio-renal homeostasis, and is involved in vascular remodeling and regulating energy metabolism. Acts by specifically binding and stimulating NPR1 to produce cGMP, which in turn activates effector proteins, such as PRKG1, that drive various biological responses. Regulates vasodilation, natriuresis, diuresis and aldosterone synthesis and is therefore essential for regulating blood pressure, controlling the extracellular fluid volume and maintaining the fluid-electrolyte balance. Also involved in inhibiting cardiac remodeling and cardiac hypertrophy by inducing cardiomyocyte apoptosis and attenuating the growth of cardiomyocytes and fibroblasts. Plays a role in female pregnancy by promoting trophoblast invasion and spiral artery remodeling in uterus, and thus prevents pregnancy-induced hypertension. In adipose tissue, acts in various cGMP- and PKG-dependent pathways to regulate lipid metabolism and energy homeostasis. This includes up-regulating lipid metabolism and mitochondrial oxygen utilization by activating the AMP-activated protein kinase (AMPK), and increasing energy expenditure by acting via MAPK11 to promote the UCP1-dependent thermogenesis of brown adipose tissue. Binds the clearance receptor NPR3 which removes the hormone from circulation. Its function is as follows. May have a role in cardio-renal homeostasis through regulation of natriuresis, diuresis, vasodilation, and inhibiting aldosterone synthesis. In vitro, promotes the production of cGMP and induces vasodilation. May promote natriuresis, at least in part, by enhancing prostaglandin E2 synthesis resulting in the inhibition of renal Na+-K+-ATPase. However reports on the involvement of this peptide in mammal blood volume and blood pressure homeostasis are conflicting; according to a report, in vivo it is not sufficient to activate cGMP and does not inhibit collecting duct transport nor effect diuresis and natriuresis. Appears to bind to specific receptors that are distinct from the receptors bound by atrial natriuretic peptide and vessel dilator. Possibly enhances protein excretion in urine by decreasing proximal tubular protein reabsorption. Functionally, may have a role in cardio-renal homeostasis through regulation of natriuresis, diuresis, and vasodilation. In vitro, promotes the production of cGMP and induces vasodilation. May promote natriuresis, at least in part, by enhancing prostaglandin E2 synthesis resulting in the inhibition of renal Na+-K+-ATPase. However reports on the involvement of this peptide in mammal blood volume and blood pressure homeostasis are conflicting; according to a report it is not sufficient to activate cGMP and does not inhibit collecting duct transport nor effect diuresis and natriuresis. Appears to bind to specific receptors that are distinct from the receptors bound by the atrial natriuretic and long-acting natriuretic peptides. Possibly functions in protein excretion in urine by maintaining the integrity of the proximal tubules and enhancing protein excretion by decreasing proximal tubular protein reabsorption. May have a role in cardio-renal homeostasis through regulation of diuresis and inhibiting aldosterone synthesis. In vitro, promotes the production of cGMP and induces vasodilation. May promote natriuresis, at least in part, by enhancing prostaglandin E2 synthesis resulting in the inhibition of renal Na+-K+-ATPase. May have a role in potassium excretion but not sodium excretion (natriuresis). Possibly enhances protein excretion in urine by decreasing proximal tubular protein reabsorption. In terms of biological role, hormone produced in the kidneys that appears to be important for maintaining cardio-renal homeostasis. Mediates vasodilation, natriuresis and diuresis primarily in the renal system, in order to maintain the extracellular fluid volume and control the fluid-electrolyte balance. Specifically binds and stimulates cGMP production by renal transmembrane receptors, likely NPR1. Urodilatin not ANP, may be the natriuretic peptide responsible for the regulation of sodium and water homeostasis in the kidney. Its function is as follows. May have a role in cardio-renal homeostasis through regulation of natriuresis and vasodilation. In vivo promotes natriuresis and in vitro, vasodilates renal artery strips. Functionally, may have a role in cardio-renal homeostasis through regulation of regulation of natriuresis and vasodilation. In vivo promotes natriuresis. In vitro, vasodilates intestinal smooth muscle but not smooth muscle strips. May have a role in cardio-renal homeostasis through regulation of natriuresis and vasodilation. In vivo promotes natriuresis. In vitro, selectively vasodilates intestinal and vascular smooth muscle strips. In terms of biological role, may have a role in cardio-renal homeostasis through regulation of natriuresis and vasodilation. In vivo promotes natriuresis. In vitro, selectively vasodilates intestinal smooth muscle but not vascular smooth muscle strips. In Equus caballus (Horse), this protein is Natriuretic peptides A (NPPA).